The chain runs to 575 residues: MNTKGKVVGVNGNLVTIEVEGSVFMNEVLFVKTAGRNLKAEVIRIRGNEVDAQVFELTKGISVGDLVEFTDKLLTVELGPGLLTQVYDGLQNPLPELAIQCGFFLERGVYLRPLNKDKKWNFKKTSKVGDIVIAGDFLGFVIEGTVHHQIMIPFYKRDSYKIVEIVSDGDYSIDEQIAVIEDDSGMRHNITMSFHWPVKVPITNYKERLIPSEPMLTQTRIIDTFFPVAKGGTFCIPGPFGAGKTVLQQVTSRNADVDVVIIAACGERAGEVVETLKEFPELMDPKTGKSLMDRTCIICNTSSMPVAAREASVYTAITIGEYYRQMGLDILLLADSTSRWAQAMREMSGRLEEIPGEEAFPAYLESVIASFYERAGIVVLNNGDIGSVTVGGSVSPAGGNFEEPVTQATLKVVGAFHGLTRERSDARKFPAISPLESWSKYKGVIDQKKTEYARSFLVKGNEINQMMKVVGEEGISNDDFLIYLKSELLDSCYLQQNSFDSIDAAVSSERQNYMFDIVYNILKTNFEFSDKLQARDFINELRQNLLDMNLSSFKDHKFNKLEHALGELINFKKVI.

Position 238–245 (238–245 (GPFGAGKT)) interacts with ATP.

This sequence belongs to the ATPase alpha/beta chains family.

The catalysed reaction is ATP + H2O + 4 H(+)(in) = ADP + phosphate + 5 H(+)(out). Its function is as follows. Produces ATP from ADP in the presence of a proton gradient across the membrane. The V-type alpha chain is a catalytic subunit. The polypeptide is V-type ATP synthase alpha chain (Borreliella burgdorferi (strain ZS7) (Borrelia burgdorferi)).